We begin with the raw amino-acid sequence, 232 residues long: Oxidoreductase 1 (232 aa).

It belongs to the MQO family. Requires FAD as cofactor.

Its function is as follows. Oxidoreductase; part of the gene cluster that mediates the biosynthesis of elsinochromes, pigments consisting of at least four interconvertible tautomers (A, B, C and D) that have a core phenolic quinone to which various side chains are attached and which play an important role in fungal pathogenesis. The non-reducing polyketide synthase PKS1 was proposed to iteratively catalyze decarboxylation between acetyl-CoA and malonyl-CoA subunits for polyketide chain elongation. The released polyketide undergoes cyclization to form an aromatic ring, and proceeds via serial modification steps to produce the heptaketide back- bone of elsinochrome. As elsinochrome has a symmetrical structure, two identical heptaketides are fused to form a core 1,2-dihydrobenzo-perylene ring structure, which can then be successively modified to produce the various derivatives of elsinochrome. Some of these reactions may be cooperatively carried out, at least in part, by the products of RDT1, OXR1 and PKS1. PRF1, embedded within the elsinochrome cluster possibly functions to stabilize some of the biosynthetic enzymes required for elsinochrome production. As prefoldin is a hexamer containing 2 a and 4 b subunits, additional prefoldin subunits, whose coding genes may not immediately link to the elsinochrome biosynthetic gene cluster, are required to fulfill the chaperone function. In addition, no methyltransferase-coding gene exists within the biosynthetic gene cluster, even though elsinochrome has four methyl groups at positions C3, C7, C8 and C12. Apparently, the identified gene cluster does not contain the entire entourage of genes responsible for elsinochrome biosynthesis. Once elsinochrome is synthesized, it must be exported outside the fungal cells, which is probably accomplished by the ECT1 transporter, to avoid toxicity. The protein is Oxidoreductase 1 of Elsinoe fawcettii (Citrus scab fungus).